The sequence spans 234 residues: Phosphoribosylaminoimidazole-succinocarboxamide synthase (234 aa).

The protein belongs to the SAICAR synthetase family.

It catalyses the reaction 5-amino-1-(5-phospho-D-ribosyl)imidazole-4-carboxylate + L-aspartate + ATP = (2S)-2-[5-amino-1-(5-phospho-beta-D-ribosyl)imidazole-4-carboxamido]succinate + ADP + phosphate + 2 H(+). It functions in the pathway purine metabolism; IMP biosynthesis via de novo pathway; 5-amino-1-(5-phospho-D-ribosyl)imidazole-4-carboxamide from 5-amino-1-(5-phospho-D-ribosyl)imidazole-4-carboxylate: step 1/2. This is Phosphoribosylaminoimidazole-succinocarboxamide synthase from Pyrobaculum aerophilum (strain ATCC 51768 / DSM 7523 / JCM 9630 / CIP 104966 / NBRC 100827 / IM2).